The chain runs to 89 residues: Small ribosomal subunit protein uS15 (89 aa).

The protein belongs to the universal ribosomal protein uS15 family. As to quaternary structure, part of the 30S ribosomal subunit. Forms a bridge to the 50S subunit in the 70S ribosome, contacting the 23S rRNA.

Functionally, one of the primary rRNA binding proteins, it binds directly to 16S rRNA where it helps nucleate assembly of the platform of the 30S subunit by binding and bridging several RNA helices of the 16S rRNA. In terms of biological role, forms an intersubunit bridge (bridge B4) with the 23S rRNA of the 50S subunit in the ribosome. This is Small ribosomal subunit protein uS15 from Staphylococcus carnosus (strain TM300).